Reading from the N-terminus, the 817-residue chain is Disks large homolog 3 (817 aa).

2 positions are modified to N-acetylmethionine: M1 and H2. The disordered stretch occupies residues W33–S101. The segment covering G40–G53 has biased composition (gly residues). Residues Q57 to P69 are compositionally biased toward polar residues. 3 consecutive PDZ domains span residues E130–R217, E226–K311, and D379–Y465. Position 139 is a phosphoserine (S139). Positions K501–E571 constitute an SH3 domain. The Guanylate kinase-like domain occupies A627–E802. The residue at position 673 (Y673) is a Phosphotyrosine.

It belongs to the MAGUK family. In terms of assembly, interacts through its PDZ domains with NETO1, GRIN2B and SYNGAP1. Interacts through its guanylate kinase-like domain with DLGAP1, DLGAP2, DLGAP3 and DLGAP4. Interacts with FLTP/C1orf192. Interacts through its PDZ domains with APC. Interacts through its first two PDZ domains with ERBB4. Interacts through its third PDZ domain with NLGN1, and probably with NLGN2 and NLGN3. Interacts with FRMPD4 (via C-terminus). Interacts with LRFN1, LRFN2 and LRFN4. Interacts with DGKI (via PDZ-binding motif).

Its function is as follows. Required for learning most likely through its role in synaptic plasticity following NMDA receptor signaling. This chain is Disks large homolog 3 (DLG3), found in Homo sapiens (Human).